We begin with the raw amino-acid sequence, 253 residues long: BRI3-binding protein (253 aa).

4 consecutive transmembrane segments (helical) span residues 19 to 39 (VLLP…PGAQ), 131 to 151 (ALVL…TLGF), 164 to 181 (FWLV…YILH), and 190 to 210 (AVLP…MGYW). Residues 219 to 253 (SPSVEEKLEHLENQVRLLNIRLNRVLENLDRSKDK) adopt a coiled-coil conformation. S250 is modified (phosphoserine).

Interacts with LETMD1. Interacts with BRI3. Interacts with BRI3; the interaction is weak. Interacts with TMEM238L.

The protein localises to the mitochondrion outer membrane. Involved in tumorigenesis and may function by stabilizing p53/TP53. The protein is BRI3-binding protein of Mus musculus (Mouse).